Reading from the N-terminus, the 272-residue chain is MWLRVTTFPDKEMAMEIASKLRNSGARVEVREIVEWDFEERYFLRGNLSELEEYEEAQDWKNYSEIIREILKGRMEVSEFEREFLKRASPENYEKVVKLKDESLGDKEFLDAMEAAFRVSLLMSSVYSFLKANGIEVGEDYIEGELPEDPTIIIELDEEVEGCEKGYFLQLTPAWDVNVDILSVLTKDVELEGLDGVVIDAAARIVMNVIAGLEDTNDIEKLREYTSGIIEDADNLDGELYVDAEEVYEAILKSLEKAGIVRVSGRKVKLRK.

This is an uncharacterized protein from Archaeoglobus fulgidus (strain ATCC 49558 / DSM 4304 / JCM 9628 / NBRC 100126 / VC-16).